The chain runs to 350 residues: Phenylalanine--tRNA ligase alpha subunit (350 aa).

Residue E262 participates in Mg(2+) binding.

Belongs to the class-II aminoacyl-tRNA synthetase family. Phe-tRNA synthetase alpha subunit type 1 subfamily. Tetramer of two alpha and two beta subunits. Mg(2+) is required as a cofactor.

It localises to the cytoplasm. It catalyses the reaction tRNA(Phe) + L-phenylalanine + ATP = L-phenylalanyl-tRNA(Phe) + AMP + diphosphate + H(+). This chain is Phenylalanine--tRNA ligase alpha subunit, found in Thermus thermophilus (strain ATCC BAA-163 / DSM 7039 / HB27).